A 429-amino-acid polypeptide reads, in one-letter code: Cyclin-B2-2 (429 aa).

Residues Ser-66–Ser-98 form a disordered region. Residues Arg-68–Ser-80 are compositionally biased toward basic and acidic residues.

It belongs to the cyclin family. Cyclin AB subfamily. In terms of assembly, interacts with CDC20-1 and CDC20-2. As to expression, expressed in roots.

This is Cyclin-B2-2 (CYCB2-2) from Arabidopsis thaliana (Mouse-ear cress).